A 332-amino-acid chain; its full sequence is Delta-aminolevulinic acid dehydratase (332 aa).

Catalysis depends on Lys199, which acts as the Schiff-base intermediate with substrate. The 5-aminolevulinate site is built by Arg209 and Lys221. A Mg(2+)-binding site is contributed by Glu237. Lys252 serves as the catalytic Schiff-base intermediate with substrate. Residues Ser278 and Tyr317 each contribute to the 5-aminolevulinate site.

The protein belongs to the ALAD family. In terms of assembly, homooctamer.

It catalyses the reaction 2 5-aminolevulinate = porphobilinogen + 2 H2O + H(+). Its pathway is porphyrin-containing compound metabolism; protoporphyrin-IX biosynthesis; coproporphyrinogen-III from 5-aminolevulinate: step 1/4. Functionally, catalyzes an early step in the biosynthesis of tetrapyrroles. Binds two molecules of 5-aminolevulinate per subunit, each at a distinct site, and catalyzes their condensation to form porphobilinogen. The sequence is that of Delta-aminolevulinic acid dehydratase (hemB) from Chlamydia pneumoniae (Chlamydophila pneumoniae).